The chain runs to 343 residues: MKTSDFDYNLPQEYIAQKPAEPRDSSRLLVLNRQSEELTNRIFGEITDYFKPGDVLVMNDSRVLPARIKGIKQDTSAKIEILLLKRDGEGCWEALLKPSKRTKPGTIIDIHQPNGGISTQAKVLADKDDSIKLLRFSDETHLMKLGEVPLPPYIHTPVADPERYQTVYALTNGSVAAPTAGLHFTPELLKRLTEMGVICTYVTLHIGLDTFRPVKEEDPKDHKIHREYGILSKETASAICCAKETGKRVFCVGTSATRLVEQASHLSQTSLITSYSGWADLFILPGYKFRVADCFITNFHLPRSTPLMLTSAFAGWPFLRKAYEKAISEHYRFYSFGDAMLIL.

It belongs to the QueA family. In terms of assembly, monomer.

It localises to the cytoplasm. The enzyme catalyses 7-aminomethyl-7-carbaguanosine(34) in tRNA + S-adenosyl-L-methionine = epoxyqueuosine(34) in tRNA + adenine + L-methionine + 2 H(+). Its pathway is tRNA modification; tRNA-queuosine biosynthesis. Transfers and isomerizes the ribose moiety from AdoMet to the 7-aminomethyl group of 7-deazaguanine (preQ1-tRNA) to give epoxyqueuosine (oQ-tRNA). In Dehalococcoides mccartyi (strain ATCC BAA-2100 / JCM 16839 / KCTC 5957 / BAV1), this protein is S-adenosylmethionine:tRNA ribosyltransferase-isomerase.